Reading from the N-terminus, the 326-residue chain is Bifunctional pinoresinol-lariciresinol reductase (326 aa).

Residues 25–31 (GGTGYLG), Arg-50, and Lys-59 contribute to the NADP(+) site. The Proton acceptor role is filled by Lys-153. Residue Arg-157 participates in NADP(+) binding. Position 285 (His-285) interacts with substrate.

Belongs to the NmrA-type oxidoreductase family. Isoflavone reductase subfamily. Dimer.

The enzyme catalyses (+)-lariciresinol + NADP(+) = (+)-pinoresinol + NADPH + H(+). It carries out the reaction (-)-secoisolariciresinol + NADP(+) = (+)-lariciresinol + NADPH + H(+). Its function is as follows. Reductase involved in lignan biosynthesis. Catalyzes the enantioselective conversion of (+)-pinoresinol into (+)-lariciresinol and of (+)-lariciresinol into (-)-secoisolariciresinol. Abstracts the 4R-hydride from the NADPH cofactor during catalysis. The polypeptide is Bifunctional pinoresinol-lariciresinol reductase (PLR1) (Linum album (Flax)).